An 86-amino-acid chain; its full sequence is Small ribosomal subunit protein bS16 (86 aa).

This sequence belongs to the bacterial ribosomal protein bS16 family.

In Leptothrix cholodnii (strain ATCC 51168 / LMG 8142 / SP-6) (Leptothrix discophora (strain SP-6)), this protein is Small ribosomal subunit protein bS16.